Consider the following 422-residue polypeptide: UDP-N-acetylglucosamine 1-carboxyvinyltransferase (422 aa).

22–23 (KN) is a binding site for phosphoenolpyruvate. Arg94 contributes to the UDP-N-acetyl-alpha-D-glucosamine binding site. The active-site Proton donor is the Cys118. Position 118 is a 2-(S-cysteinyl)pyruvic acid O-phosphothioketal (Cys118). UDP-N-acetyl-alpha-D-glucosamine is bound by residues 123-127 (RPVDL), 163-166 (KVSV), Asp308, and Ile330.

The protein belongs to the EPSP synthase family. MurA subfamily.

It is found in the cytoplasm. The enzyme catalyses phosphoenolpyruvate + UDP-N-acetyl-alpha-D-glucosamine = UDP-N-acetyl-3-O-(1-carboxyvinyl)-alpha-D-glucosamine + phosphate. It participates in cell wall biogenesis; peptidoglycan biosynthesis. Its function is as follows. Cell wall formation. Adds enolpyruvyl to UDP-N-acetylglucosamine. The chain is UDP-N-acetylglucosamine 1-carboxyvinyltransferase from Yersinia enterocolitica serotype O:8 / biotype 1B (strain NCTC 13174 / 8081).